The following is an 809-amino-acid chain: MEKQNEEISTDDAETSQSQLVDDSKVETLDDCVSKVETLDDCVSKVETLDDCVSKAETLADCVSKVETLDDCVSKVKTLDDCVSKVENLDDCVPKVETLDDCVPKVETLDDCVSEVETLDDCVSKAQGLKEEGNKLFQKRDYDGAMFKYGEAIKILPKDHVEVSHVRANVASCYMQLEPGEFAKAIHECDLALSVTPDHNKALLKRARCYEALNKLDLALRDVCMVSKLDPKNPMASEIVEKLKRTLESKGLRINNSVIELPPDYVEPVGASPAALWAKLGKVRVKKTKKSNQVEEKSEGEGEDVEPEKKNNVLAEKGKEKIKMKVKGKQSDKRSDTSKEQEKVIIEEELLVIGVEDVNKDVKFVYSDDIRLAELPINCTLFKLREVVHERFPSLRAVHIKYRDQEGDLVTITTDEELRMSEVSSRSQGTMRFYVVEVSPEQDPFFGRLVEMKKLKITADSFKAKVNGRGGCKVEDWMIEFAHLFKIQARIDSDRCLNLQELGMKLNSEAMEEVVTSDAAQGPFDRAAQQFQEVAARSLLNLGYVHMSGARKRLSLLQGVSGESVSEQVKTAYECAKKEHANAKEKYEEAMKIKPECFEVFLALGLQQFEEARLSWYYVLVSHLDLKTWPYADVVQFYQSAESNIKKSMEVLENLETGKESEPSQAGKTDCLTHEKDLGSSTQNNPAKEAGRLKSWIDILLCAVLYERSIMEYKLDQPFWRESLEAAMEKFELAGTCKDDVVEIISEDYVAGNTLRDIRFHMEEIIQIFDEIYEAKHWTNGIPSDQLEEILKRRAENIFHVPNIAIQRG.

A disordered region spans residues 1-22 (MEKQNEEISTDDAETSQSQLVD). TPR repeat units follow at residues 126–159 (AQGLKEEGNKLFQKRDYDGAMFKYGEAIKILPKD), 164–199 (SHVRANVASCYMQLEPGEFAKAIHECDLALSVTPDH), 200–233 (NKALLKRARCYEALNKLDLALRDVCMVSKLDPKN), 235–265 (MASEIVEKLKRTLESKGLRINNSVIELPPDY), and 274–311 (AALWAKLGKVRVKKTKKSNQVEEKSEGEGEDVEPEKKN). A disordered region spans residues 288-339 (TKKSNQVEEKSEGEGEDVEPEKKNNVLAEKGKEKIKMKVKGKQSDKRSDTSK). Phosphoserine is present on S298. A compositionally biased stretch (basic and acidic residues) spans 307–339 (PEKKNNVLAEKGKEKIKMKVKGKQSDKRSDTSK). The region spanning 359-438 (NKDVKFVYSD…GTMRFYVVEV (80 aa)) is the PB1 domain. TPR repeat units lie at residues 508 to 541 (SEAMEEVVTSDAAQGPFDRAAQQFQEVAARSLLN), 563 to 597 (ESVSEQVKTAYECAKKEHANAKEKYEEAMKIKPEC), and 615 to 648 (SWYYVLVSHLDLKTWPYADVVQFYQSAESNIKKS). The interval 656–686 (ETGKESEPSQAGKTDCLTHEKDLGSSTQNNP) is disordered. One copy of the TPR 9 repeat lies at 709–741 (SIMEYKLDQPFWRESLEAAMEKFELAGTCKDDV).

Its function is as follows. Carboxylate clamp type tetratricopeptide repeat protein that may act as a potential Hsp90/Hsp70 co-chaperone. Contributes to polar growth of root hairs. In Arabidopsis thaliana (Mouse-ear cress), this protein is Protein PHOX3.